A 160-amino-acid chain; its full sequence is SsrA-binding protein (160 aa).

It belongs to the SmpB family.

The protein resides in the cytoplasm. Its function is as follows. Required for rescue of stalled ribosomes mediated by trans-translation. Binds to transfer-messenger RNA (tmRNA), required for stable association of tmRNA with ribosomes. tmRNA and SmpB together mimic tRNA shape, replacing the anticodon stem-loop with SmpB. tmRNA is encoded by the ssrA gene; the 2 termini fold to resemble tRNA(Ala) and it encodes a 'tag peptide', a short internal open reading frame. During trans-translation Ala-aminoacylated tmRNA acts like a tRNA, entering the A-site of stalled ribosomes, displacing the stalled mRNA. The ribosome then switches to translate the ORF on the tmRNA; the nascent peptide is terminated with the 'tag peptide' encoded by the tmRNA and targeted for degradation. The ribosome is freed to recommence translation, which seems to be the essential function of trans-translation. The chain is SsrA-binding protein from Citrobacter koseri (strain ATCC BAA-895 / CDC 4225-83 / SGSC4696).